The sequence spans 486 residues: Kynurenine 3-monooxygenase (486 aa).

FAD contacts are provided by residues Val-19, 37–40 (YEAR), and Ala-57. The L-kynurenine site is built by Arg-85 and Tyr-99. Residues Arg-111, Leu-136, Thr-172, Asp-304, and 317 to 318 (MN) each bind FAD. 2 residues coordinate L-kynurenine: Asn-363 and Tyr-398. 2 consecutive transmembrane segments (helical) span residues 385-404 (FLHA…VTFS) and 425-445 (GLFF…IHYM). N-linked (GlcNAc...) asparagine glycosylation occurs at Asn-465.

Belongs to the aromatic-ring hydroxylase family. KMO subfamily. The cofactor is FAD. As to expression, highest levels in placenta and liver. Detectable in kidney.

The protein localises to the mitochondrion outer membrane. It carries out the reaction L-kynurenine + NADPH + O2 + H(+) = 3-hydroxy-L-kynurenine + NADP(+) + H2O. It functions in the pathway cofactor biosynthesis; NAD(+) biosynthesis; quinolinate from L-kynurenine: step 1/3. Functionally, catalyzes the hydroxylation of L-kynurenine (L-Kyn) to form 3-hydroxy-L-kynurenine (L-3OHKyn). Required for synthesis of quinolinic acid, a neurotoxic NMDA receptor antagonist and potential endogenous inhibitor of NMDA receptor signaling in axonal targeting, synaptogenesis and apoptosis during brain development. Quinolinic acid may also affect NMDA receptor signaling in pancreatic beta cells, osteoblasts, myocardial cells, and the gastrointestinal tract. The chain is Kynurenine 3-monooxygenase from Homo sapiens (Human).